The chain runs to 374 residues: PqqA peptide cyclase (374 aa).

The Radical SAM core domain occupies 7-222; sequence VTPPLWLLAE…VADYRQRMGA (216 aa). Positions 21, 25, and 28 each coordinate [4Fe-4S] cluster.

Belongs to the radical SAM superfamily. PqqE family. In terms of assembly, interacts with PqqD. The interaction is necessary for activity of PqqE. [4Fe-4S] cluster is required as a cofactor.

The catalysed reaction is [PQQ precursor protein] + S-adenosyl-L-methionine = E-Y cross-linked-[PQQ precursor protein] + 5'-deoxyadenosine + L-methionine + H(+). The protein operates within cofactor biosynthesis; pyrroloquinoline quinone biosynthesis. In terms of biological role, catalyzes the cross-linking of a glutamate residue and a tyrosine residue in the PqqA protein as part of the biosynthesis of pyrroloquinoline quinone (PQQ). In Kluyvera intermedia (Enterobacter intermedius), this protein is PqqA peptide cyclase.